The chain runs to 179 residues: Adenine phosphoribosyltransferase (179 aa).

This sequence belongs to the purine/pyrimidine phosphoribosyltransferase family. In terms of assembly, homodimer.

It localises to the cytoplasm. It carries out the reaction AMP + diphosphate = 5-phospho-alpha-D-ribose 1-diphosphate + adenine. It functions in the pathway purine metabolism; AMP biosynthesis via salvage pathway; AMP from adenine: step 1/1. Functionally, catalyzes a salvage reaction resulting in the formation of AMP, that is energically less costly than de novo synthesis. The protein is Adenine phosphoribosyltransferase of Bradyrhizobium diazoefficiens (strain JCM 10833 / BCRC 13528 / IAM 13628 / NBRC 14792 / USDA 110).